A 637-amino-acid polypeptide reads, in one-letter code: Sodium-dependent proline transporter (637 aa).

Residues 1-45 (MKKLQEAHLRKPITPDLLMTPSDQGDVDLDVDFAADRGNWTGKLD) are Cytoplasmic-facing. Threonine 20 bears the Phosphothreonine mark. Residue serine 22 is modified to Phosphoserine. 3 helical membrane-spanning segments follow: residues 46-66 (FLLS…FPYR), 74-93 (AFLV…LFFL), and 117-137 (GAGA…NMII). Residues 138–214 (AYVLFYLFAS…QGIGRPGEIR (77 aa)) lie on the Extracellular side of the membrane. Residue asparagine 182 is glycosylated (N-linked (GlcNAc...) asparagine). 9 helical membrane passes run 215–233 (WNLC…LCIL), 242–259 (VVYF…MLLV), 295–312 (IFYS…FASY), 324–345 (FIVT…FSVL), 378–397 (LPLS…TLGL), 425–443 (VFSG…ILTT), 459–479 (SFGL…VYGI), 500–519 (ACWL…YSIV), and 538–556 (LGIL…GMLV). At 557–637 (AVLREEGSLW…IAEEEEESMM (81 aa)) the chain is on the cytoplasmic side. Serine 573 and serine 582 each carry phosphoserine. Threonine 588 is subject to Phosphothreonine. Tyrosine 591 is modified (phosphotyrosine). Serine 598 and serine 600 each carry phosphoserine.

This sequence belongs to the sodium:neurotransmitter symporter (SNF) (TC 2.A.22) family. SLC6A7 subfamily.

The protein resides in the synaptic cell membrane. It carries out the reaction L-proline(out) + chloride(out) + 2 Na(+)(out) = L-proline(in) + chloride(in) + 2 Na(+)(in). It catalyses the reaction L-pipecolate(out) + chloride(out) + 2 Na(+)(out) = L-pipecolate(in) + chloride(in) + 2 Na(+)(in). Its function is as follows. Brain specific sodium (and chloride)-dependent proline transporter. Terminates the action of proline by its high affinity sodium-dependent reuptake into presynaptic terminals. The chain is Sodium-dependent proline transporter from Mus musculus (Mouse).